Reading from the N-terminus, the 375-residue chain is CCN family member 1 (375 aa).

The first 22 residues, 1 to 22 (MGSAGARPALAAALLCLARLAL), serve as a signal peptide directing secretion. The IGFBP N-terminal domain occupies 23-94 (GSPCPAVCQC…AATNGICRAQ (72 aa)). 6 disulfide bridges follow: C26–C50, C30–C52, C32–C53, C39–C56, C64–C78, and C70–C91. In terms of domain architecture, VWFC spans 98-164 (RPCEYNSKIY…GQCCEEWVCD (67 aa)). The 46-residue stretch at 223 to 268 (KCIVQTTSWSQCSKTCGTGISTRVTNDNPDCKLIKETRICEVRPCG) folds into the TSP type-1 domain. The segment at 274 to 310 (SLKKGKKCTKTKKSPSPVRFTYAGCSSVKKYRPKYCG) is heparin-binding. Intrachain disulfides connect C281–C318, C298–C332, C309–C348, C312–C350, and C317–C354. The 75-residue stretch at 281-355 (CTKTKKSPSP…QSCRCNYNCP (75 aa)) folds into the CTCK domain.

This sequence belongs to the CCN family.

Its subcellular location is the secreted. Probable secreted regulatory protein. The chain is CCN family member 1 (CCN1) from Gallus gallus (Chicken).